The chain runs to 199 residues: Acireductone dioxygenase 3 (199 aa).

The Fe(2+) site is built by His99, His101, Glu105, and His144. 4 residues coordinate Ni(2+): His99, His101, Glu105, and His144.

Belongs to the acireductone dioxygenase (ARD) family. It depends on Fe(2+) as a cofactor. Requires Ni(2+) as cofactor.

It is found in the cytoplasm. It localises to the nucleus. It carries out the reaction 1,2-dihydroxy-5-(methylsulfanyl)pent-1-en-3-one + O2 = 4-methylsulfanyl-2-oxobutanoate + formate + 2 H(+). The catalysed reaction is 1,2-dihydroxy-5-(methylsulfanyl)pent-1-en-3-one + O2 = 3-(methylsulfanyl)propanoate + CO + formate + 2 H(+). It functions in the pathway amino-acid biosynthesis; L-methionine biosynthesis via salvage pathway; L-methionine from S-methyl-5-thio-alpha-D-ribose 1-phosphate: step 5/6. Functionally, catalyzes 2 different reactions between oxygen and the acireductone 1,2-dihydroxy-3-keto-5-methylthiopentene (DHK-MTPene) depending upon the metal bound in the active site. Fe-containing acireductone dioxygenase (Fe-ARD) produces formate and 2-keto-4-methylthiobutyrate (KMTB), the alpha-ketoacid precursor of methionine in the methionine recycle pathway. Ni-containing acireductone dioxygenase (Ni-ARD) produces methylthiopropionate, carbon monoxide and formate, and does not lie on the methionine recycle pathway. This Arabidopsis thaliana (Mouse-ear cress) protein is Acireductone dioxygenase 3 (ARD3).